The primary structure comprises 213 residues: uncharacterized protein (213 aa).

S-adenosyl-L-methionine-binding residues include G53, E74, and D97.

The protein belongs to the methyltransferase superfamily. YrrT family.

Could be a S-adenosyl-L-methionine-dependent methyltransferase. This is an uncharacterized protein from Geobacillus sp. (strain WCH70).